A 273-amino-acid polypeptide reads, in one-letter code: Putative phosphoenolpyruvate synthase regulatory protein (273 aa).

Residue 153–160 (AVSRAGKT) coordinates ADP.

Belongs to the pyruvate, phosphate/water dikinase regulatory protein family. PSRP subfamily.

It carries out the reaction [pyruvate, water dikinase] + ADP = [pyruvate, water dikinase]-phosphate + AMP + H(+). The catalysed reaction is [pyruvate, water dikinase]-phosphate + phosphate + H(+) = [pyruvate, water dikinase] + diphosphate. In terms of biological role, bifunctional serine/threonine kinase and phosphorylase involved in the regulation of the phosphoenolpyruvate synthase (PEPS) by catalyzing its phosphorylation/dephosphorylation. The chain is Putative phosphoenolpyruvate synthase regulatory protein from Xylella fastidiosa (strain M12).